Consider the following 429-residue polypeptide: Enolase (429 aa).

Glutamine 167 serves as a coordination point for (2R)-2-phosphoglycerate. Glutamate 209 acts as the Proton donor in catalysis. Residues aspartate 246, glutamate 289, and aspartate 316 each contribute to the Mg(2+) site. (2R)-2-phosphoglycerate is bound by residues lysine 341, arginine 370, serine 371, and lysine 392. Lysine 341 (proton acceptor) is an active-site residue.

The protein belongs to the enolase family. As to quaternary structure, component of the RNA degradosome, a multiprotein complex involved in RNA processing and mRNA degradation. It depends on Mg(2+) as a cofactor.

The protein resides in the cytoplasm. Its subcellular location is the secreted. It localises to the cell surface. It catalyses the reaction (2R)-2-phosphoglycerate = phosphoenolpyruvate + H2O. It functions in the pathway carbohydrate degradation; glycolysis; pyruvate from D-glyceraldehyde 3-phosphate: step 4/5. Functionally, catalyzes the reversible conversion of 2-phosphoglycerate (2-PG) into phosphoenolpyruvate (PEP). It is essential for the degradation of carbohydrates via glycolysis. In Pseudomonas entomophila (strain L48), this protein is Enolase.